Consider the following 259-residue polypeptide: UPF0246 protein MADE_1015435 (259 aa).

It belongs to the UPF0246 family.

This chain is UPF0246 protein MADE_1015435, found in Alteromonas mediterranea (strain DSM 17117 / CIP 110805 / LMG 28347 / Deep ecotype).